Here is a 966-residue protein sequence, read N- to C-terminus: Glycine dehydrogenase (decarboxylating) (966 aa).

Residue Lys-713 is modified to N6-(pyridoxal phosphate)lysine.

This sequence belongs to the GcvP family. In terms of assembly, the glycine cleavage system is composed of four proteins: P, T, L and H. Pyridoxal 5'-phosphate serves as cofactor.

The catalysed reaction is N(6)-[(R)-lipoyl]-L-lysyl-[glycine-cleavage complex H protein] + glycine + H(+) = N(6)-[(R)-S(8)-aminomethyldihydrolipoyl]-L-lysyl-[glycine-cleavage complex H protein] + CO2. Its function is as follows. The glycine cleavage system catalyzes the degradation of glycine. The P protein binds the alpha-amino group of glycine through its pyridoxal phosphate cofactor; CO(2) is released and the remaining methylamine moiety is then transferred to the lipoamide cofactor of the H protein. In Shewanella halifaxensis (strain HAW-EB4), this protein is Glycine dehydrogenase (decarboxylating).